An 839-amino-acid chain; its full sequence is MNMARQGLFQTVGSGLDHILSLADVEEEQMIQSVDRTAVTGASYFTSVDQSSVHTAEVGSHQSEPLKTSVDKPGSKKTQGEKFFLIHSADWLSTHALFHEVAKLDVVSLLYNEQFAVQGLLRYHTYARFGIEIQVQINPTPFQQGGLICAMVPGDQGYGSIASLTVYPHGLLNCNINNVVRIKVPFIYTRGAYHFKDPQYPVWELTIRVWSEFNIGTGTSAYTSLNVLARFTDLELHGLTPLSTQMMRNEFRVSTTENVVNLSNYEDARAKMSFALDQENWRSDPSEGGGIKITHFSTWTSIPTLAAQFAFNASASVGQQIKVIPVDPYFYQMTNSNPDQKYITALASICQMFCFWRGDLVFDFQVFPTKYHSGRLQFCFVPGNELIEVTSITLKQATTAPCAVMDITGVQSTLRFRVPWISDTPYRVNCYIKSSHQKGEYTAIEKLIVYCYNRLTSPSNVASHVRVNVYLSAINLECFAPLYHAMDVTSQTGDDSGGFSTTVSTEQNVPDPQVGITTPKDLKGKANKGKMDVSGVQAPVGAITTIEDPVLAKKVPETFPELKPGESRHTSDHMSVYKFMGRSHFLCTFTFNANNREYTFPITLSSTSNPPHGSPSTLRWFFNLFQLYRGPLDLTIIITGATDVDGMAWFTPVGLAVDTPWVEKQSALTIDYKTALGAIRFNTRRTGNIQIRLPWYSYLYAVSGALDGLGDTTDSTFGLVSIQIANYNHSDEYLSFSCYLSVTEQSEFFFPRAPLNSSAMMTSENMLDRIAGGDLESSVDDPRTDEDRRFESHIEKKPYKELRLEVGKQRFKYAREELSNEILPPPRKLKGLFSQSKIS.

Positions 55 to 66 (TAEVGSHQSEPL) are enriched in polar residues. The interval 55–76 (TAEVGSHQSEPLKTSVDKPGSK) is disordered. 2 consecutive short sequence motifs ((L)YPX(n)L motif) follow at residues 167–171 (YPHGL) and 200–205 (YPVWEL). Positions 496–510 (SGGFSTTVSTEQNVP) are enriched in polar residues. 2 disordered regions span residues 496-530 (SGGF…NKGK) and 773-792 (GDLE…RFES). The tract at residues 766 to 836 (MLDRIAGGDL…RKLKGLFSQS (71 aa)) is involved in P1-2A pentamerization. The segment covering 780 to 792 (DDPRTDEDRRFES) has biased composition (basic and acidic residues).

It belongs to the picornaviridae polyprotein family. Homodimer. Homomultimer; probably interacts with membranes in a multimeric form. Seems to assemble into amyloid-like fibers. In terms of assembly, homopentamer. Homooligomer. As to quaternary structure, interacts with capsid protein VP2. Interacts with capsid protein VP3. Interacts with capsid protein VP1. Interacts with capsid protein VP3. In terms of assembly, interacts with capsid protein VP1. Interacts with capsid protein VP2. Specific enzymatic cleavages by viral protease in vivo yield a variety of precursors and mature proteins. Polyprotein processing intermediates are produced, such as P1-2A which is a functional precursor of the structural proteins, VP0 which is a VP4-VP2 precursor, VP1-2A precursor, 3ABC precursor which is a stable and catalytically active precursor of 3A, 3B and 3C proteins, 3AB and 3CD precursors. The assembly signal 2A is removed from VP1-2A by a host protease, possibly host Cathepsin L. This cleavage occurs over a region of 3 amino-acids probably generating VP1 proteins with heterogeneous C-termini. Post-translationally, during virion maturation, immature virions are rendered infectious following cleavage of VP0 into VP4 and VP2. This maturation seems to be an autocatalytic event triggered by the presence of RNA in the capsid and is followed by a conformational change of the particle. In terms of processing, the assembly signal 2A is removed from VP1-2A by a host protease, possibly host Cathepsin L in naked virions. This cleavage does not occur in enveloped virions. This cleavage occurs over a region of 3 amino-acids probably generating VP1 proteins with heterogeneous C-termini. Unlike other picornaviruses, does not seem to be myristoylated.

The protein localises to the virion. It localises to the host endosome. The protein resides in the host multivesicular body. It is found in the host membrane. Its function is as follows. Capsid proteins VP1, VP2, and VP3 form a closed capsid enclosing the viral positive strand RNA genome. All these proteins contain a beta-sheet structure called beta-barrel jelly roll. Together they form an icosahedral capsid (T=3) composed of 60 copies of each VP1, VP2, and VP3, with a diameter of approximately 300 Angstroms. VP1 is situated at the 12 fivefold axes, whereas VP2 and VP3 are located at the quasi-sixfold axes. The naked capsid interacts with the host receptor HAVCR1 to provide virion attachment to and probably entry into the target cell. VP0 precursor is a component of the immature procapsids. In terms of biological role, plays a role in the assembly of the 12 pentamers into an icosahedral structure. Has not been detected in mature virions, supposedly owing to its small size. Functionally, precursor component of immature procapsids that corresponds to an extended form of the structural protein VP1. After maturation, possibly by the host Cathepsin L, the assembly signal 2A is cleaved to give rise to the mature VP1 protein. Its function is as follows. Affects membrane integrity and causes an increase in membrane permeability. Functions as a viroporin. Affects membrane integrity and causes an increase in membrane permeability. Involved in host intracellular membrane rearrangements probably to give rise to the viral factories. Does not disrupt calcium homeostasis or glycoprotein trafficking. Antagonizes the innate immune response of the host by suppressing IFN-beta synthesis, which it achieves by interfering with the RIG-I/IFIH1 pathway. The sequence is that of Genome polyprotein from Callithrix (Owl-faced monkey).